Consider the following 485-residue polypeptide: Katanin p60 ATPase-containing subunit A1 (485 aa).

The tract at residues 101-173 is disordered; sequence HRSSPCVVRK…KNKAEAVETE (73 aa). The span at 141–173 shows a compositional bias: basic and acidic residues; sequence NGDKGKPQKSKEKKENPSKPKEDKNKAEAVETE. 244-251 is a binding site for ATP; that stretch reads GPPGTGKT.

This sequence belongs to the AAA ATPase family. Katanin p60 subunit A1 subfamily. As to quaternary structure, can homooligomerize into hexameric rings, which may be promoted by interaction with microtubules. Interacts with katnb1, which may serve as a targeting subunit.

It is found in the cytoplasm. The protein localises to the cytoskeleton. Its subcellular location is the microtubule organizing center. It localises to the centrosome. The protein resides in the spindle pole. It is found in the spindle. It carries out the reaction n ATP + n H2O + a microtubule = n ADP + n phosphate + (n+1) alpha/beta tubulin heterodimers.. With respect to regulation, ATPase activity is stimulated by microtubules, which promote homooligomerization. ATP-dependent microtubule severing is stimulated by interaction with katnb1. Catalytic subunit of a complex which severs microtubules in an ATP-dependent manner. Microtubule severing may promote rapid reorganization of cellular microtubule arrays and the release of microtubules from the centrosome following nucleation. The sequence is that of Katanin p60 ATPase-containing subunit A1 (katna1) from Danio rerio (Zebrafish).